A 420-amino-acid chain; its full sequence is Glucose-1-phosphate adenylyltransferase (420 aa).

Alpha-D-glucose 1-phosphate-binding positions include Tyr-108, Gly-173, 188-189 (EK), and Ser-206.

This sequence belongs to the bacterial/plant glucose-1-phosphate adenylyltransferase family. Homotetramer.

It carries out the reaction alpha-D-glucose 1-phosphate + ATP + H(+) = ADP-alpha-D-glucose + diphosphate. Its pathway is glycan biosynthesis; glycogen biosynthesis. Involved in the biosynthesis of ADP-glucose, a building block required for the elongation reactions to produce glycogen. Catalyzes the reaction between ATP and alpha-D-glucose 1-phosphate (G1P) to produce pyrophosphate and ADP-Glc. The sequence is that of Glucose-1-phosphate adenylyltransferase from Paraburkholderia phytofirmans (strain DSM 17436 / LMG 22146 / PsJN) (Burkholderia phytofirmans).